A 522-amino-acid chain; its full sequence is Signal transduction histidine-protein kinase/phosphatase MprB (522 aa).

Residues 1-30 lie on the Cytoplasmic side of the membrane; sequence MIRLHRPQRPPLRAPLRATPSLSLRWRVML. The helical transmembrane segment at 31 to 51 threads the bilayer; the sequence is LAMSMVAMVVVLMAFAVYAVI. Topologically, residues 52-167 are extracellular; the sequence is SAALYSDIDN…PTEAVMNKLR (116 aa). Residues 168-188 form a helical membrane-spanning segment; sequence WVLLIVGGVGVAVAAVAGGMV. At 189 to 522 the chain is on the cytoplasmic side; the sequence is TRAGLRPVAR…SVDSQSARAR (334 aa). The HAMP domain maps to 190–242; it reads RAGLRPVARLTEAAERVARTDDLRPIPVFGSDELARLTESFNLMLRALAESRE. In terms of domain architecture, Histidine kinase spans 250–470; it reads DAGHELRTPL…SFYVLLPGRP (221 aa). His253 carries the post-translational modification Phosphohistidine; by autocatalysis. A disordered region spans residues 468–522; the sequence is GRPLPPAGHSTPAGESETDKAEAATDPAVPVAGDTANSRESANVISVDSQSARAR. A compositionally biased stretch (polar residues) spans 502-522; that stretch reads TANSRESANVISVDSQSARAR.

It depends on Mg(2+) as a cofactor. Requires Mn(2+) as cofactor. In terms of processing, autophosphorylated.

The protein resides in the cell membrane. The enzyme catalyses ATP + protein L-histidine = ADP + protein N-phospho-L-histidine.. In terms of biological role, member of the two-component regulatory system MprB/MprA which contributes to maintaining a balance among several systems involved in stress resistance and is required for establishment and maintenance of persistent infection in the host. In response to environmental signals MprB acts both as a membrane-associated protein kinase that undergoes autophosphorylation and subsequently transfers the phosphate to MprA, and a protein phosphatase that dephosphorylates phospho-MprA. The sequence is that of Signal transduction histidine-protein kinase/phosphatase MprB (mprB) from Mycobacterium avium (strain 104).